We begin with the raw amino-acid sequence, 323 residues long: HPr kinase/phosphorylase (323 aa).

Active-site residues include His146 and Lys167. 161-168 contacts ATP; the sequence is GESGLGKS. Mg(2+) is bound at residue Ser168. Asp185 (proton acceptor; for phosphorylation activity. Proton donor; for dephosphorylation activity) is an active-site residue. The important for the catalytic mechanism of both phosphorylation and dephosphorylation stretch occupies residues 209 to 218; the sequence is LEVRGLGLLD. Mg(2+) is bound at residue Glu210. Residue Arg250 is part of the active site. Residues 271 to 276 form an important for the catalytic mechanism of dephosphorylation region; that stretch reads QVAAGR.

The protein belongs to the HPrK/P family. As to quaternary structure, homohexamer. It depends on Mg(2+) as a cofactor.

The catalysed reaction is [HPr protein]-L-serine + ATP = [HPr protein]-O-phospho-L-serine + ADP + H(+). The enzyme catalyses [HPr protein]-O-phospho-L-serine + phosphate + H(+) = [HPr protein]-L-serine + diphosphate. Its function is as follows. Catalyzes the ATP- as well as the pyrophosphate-dependent phosphorylation of a specific serine residue in HPr, a phosphocarrier protein of the phosphoenolpyruvate-dependent sugar phosphotransferase system (PTS). HprK/P also catalyzes the pyrophosphate-producing, inorganic phosphate-dependent dephosphorylation (phosphorolysis) of seryl-phosphorylated HPr (P-Ser-HPr). In Cupriavidus metallidurans (strain ATCC 43123 / DSM 2839 / NBRC 102507 / CH34) (Ralstonia metallidurans), this protein is HPr kinase/phosphorylase.